The primary structure comprises 431 residues: Serine--tRNA ligase (431 aa).

Residues 41 to 66 (QSRTQELQAERNARSKSIGEAARRGE) are disordered. Residue 240–242 (TSE) participates in L-serine binding. Position 271-273 (271-273 (RSE)) interacts with ATP. An L-serine-binding site is contributed by Glu-294. An ATP-binding site is contributed by 358–361 (EISS). Ser-392 serves as a coordination point for L-serine.

The protein belongs to the class-II aminoacyl-tRNA synthetase family. Type-1 seryl-tRNA synthetase subfamily. As to quaternary structure, homodimer. The tRNA molecule binds across the dimer.

The protein localises to the cytoplasm. The enzyme catalyses tRNA(Ser) + L-serine + ATP = L-seryl-tRNA(Ser) + AMP + diphosphate + H(+). It catalyses the reaction tRNA(Sec) + L-serine + ATP = L-seryl-tRNA(Sec) + AMP + diphosphate + H(+). Its pathway is aminoacyl-tRNA biosynthesis; selenocysteinyl-tRNA(Sec) biosynthesis; L-seryl-tRNA(Sec) from L-serine and tRNA(Sec): step 1/1. Catalyzes the attachment of serine to tRNA(Ser). Is also able to aminoacylate tRNA(Sec) with serine, to form the misacylated tRNA L-seryl-tRNA(Sec), which will be further converted into selenocysteinyl-tRNA(Sec). In Aeromonas hydrophila subsp. hydrophila (strain ATCC 7966 / DSM 30187 / BCRC 13018 / CCUG 14551 / JCM 1027 / KCTC 2358 / NCIMB 9240 / NCTC 8049), this protein is Serine--tRNA ligase.